The primary structure comprises 441 residues: Malate dehydrogenase [NADP], chloroplastic (441 aa).

The transit peptide at 1 to 58 (MALTQLNSTCSKPQLHSSSQLSFLSRTRTRTLPRHYHSTFAPLHRTQHARISCSVAPN) directs the protein to the chloroplast. A disulfide bridge connects residues cysteine 76 and cysteine 81. Residue 105–111 (GAAGMIS) coordinates NADP(+). 2 residues coordinate substrate: arginine 186 and arginine 192. Asparagine 199 is a binding site for NADP(+). Glutamine 206 serves as a coordination point for NAD(+). NADP(+) is bound at residue 223-225 (VGN). Residues asparagine 225 and arginine 256 each contribute to the substrate site. Catalysis depends on histidine 281, which acts as the Proton acceptor. Cysteines 417 and 429 form a disulfide.

The protein belongs to the LDH/MDH superfamily. MDH type 2 family. In terms of assembly, homodimer.

The protein resides in the plastid. Its subcellular location is the chloroplast. The catalysed reaction is (S)-malate + NADP(+) = oxaloacetate + NADPH + H(+). Chloroplast NADP-MDH is activated upon illumination. In order to be enzymatically active, disulfide bridges on the protein must be reduced by thioredoxin which receives electrons from ferredoxin and the electron transport system of photosynthesis. Functionally, the chloroplastic, NADP-dependent form is essential for the photosynthesis C4 cycle, which allows plants to circumvent the problem of photorespiration. In C4 plants, NADP-MDH activity acts to convert oxaloacetate to malate in chloroplasts of mesophyll cells for transport to the bundle sheath cells. The chain is Malate dehydrogenase [NADP], chloroplastic from Pisum sativum (Garden pea).